We begin with the raw amino-acid sequence, 892 residues long: Translation initiation factor IF-2 (892 aa).

Positions 88–304 (KKRTFVKRDP…SSLQQGFQKP (217 aa)) are disordered. 2 stretches are compositionally biased toward basic and acidic residues: residues 93 to 159 (VKRD…KDKV) and 166 to 216 (DMTK…EENK). The segment covering 254-269 (GRGRNAKAARPAKKGK) has biased composition (basic residues). Basic and acidic residues predominate over residues 270–282 (HAESKADREEARA). Residues 391–560 (PRAPVVTIMG…LLQAEVLELK (170 aa)) form the tr-type G domain. Positions 400 to 407 (GHVDHGKT) are G1. 400-407 (GHVDHGKT) lines the GTP pocket. The segment at 425-429 (GITQH) is G2. Positions 446-449 (DTPG) are G3. GTP is bound by residues 446–450 (DTPGH) and 500–503 (NKID). A G4 region spans residues 500–503 (NKID). A G5 region spans residues 536 to 538 (SAK).

This sequence belongs to the TRAFAC class translation factor GTPase superfamily. Classic translation factor GTPase family. IF-2 subfamily.

Its subcellular location is the cytoplasm. Its function is as follows. One of the essential components for the initiation of protein synthesis. Protects formylmethionyl-tRNA from spontaneous hydrolysis and promotes its binding to the 30S ribosomal subunits. Also involved in the hydrolysis of GTP during the formation of the 70S ribosomal complex. The polypeptide is Translation initiation factor IF-2 (Salmonella choleraesuis (strain SC-B67)).